Consider the following 483-residue polypeptide: Leukocyte immunoglobulin-like receptor subfamily A member 2 (483 aa).

A signal peptide spans 1 to 23 (MTPILTVLICLGLSLGPRTHVQA). The Extracellular segment spans residues 24-449 (GHLPKPTLWA…QHPQDYTVEN (426 aa)). 4 Ig-like C2-type domains span residues 27-113 (PKPT…DPLE), 117-222 (TGAY…GVSK), 224-313 (PSLS…DPLD), and 324-413 (PSLS…SDPL). A disulfide bond links Cys-49 and Cys-97. N-linked (GlcNAc...) asparagine glycosylation is found at Asn-64, Asn-103, and Asn-138. 2 disulfides stabilise this stretch: Cys-143/Cys-195 and Cys-244/Cys-295. Asn-279, Asn-300, and Asn-339 each carry an N-linked (GlcNAc...) asparagine glycan. A disulfide bridge connects residues Cys-344 and Cys-395. A 3'-nitrotyrosine modification is found at Tyr-404. Asn-429 carries an N-linked (GlcNAc...) asparagine glycan. The chain crosses the membrane as a helical span at residues 450-470 (LIRMGVAGLVLVVLGILLFEA). The Cytoplasmic portion of the chain corresponds to 471–483 (QHSQRSLQDAAGR).

Homodimer. As to expression, detected on the surface of all peripheral blood monocytes, neutrophils, basophils and eosinophils (at protein level). Expression levels are very low or not detectable on monocytes, T-cells, B-cells, dendritic cells and natural killer (NK) cells.

The protein localises to the cell membrane. It localises to the secreted. Its function is as follows. Part of the innate immune responses against microbial infection. Specifically recognizes a set of N-terminally truncated immunoglobulins that are produced via cleavage by proteases from a range of pathogenic bacteria and fungi, including L.pneumophila, M.hyorhinis, S.pneumoniae, S.aureus and C.albicans. Recognizes epitopes that are in part in the variable region of the immunoglobulin light chains, but requires also the constant region for signaling. Binds to a subset of cleaved IgM, IgG3 and IgG4 molecules, but does not bind cleaved IgA1. Binding of N-terminally truncated immunoglobulins mediates activation of neutrophils. In monocytes, activation leads to the release of CSF2, CF3, IL6, CXCL8 and CCL3 and down-regulates responses to bacterial lipopolysaccharide (LPS), possibly via down-regulation of TLR4 expression and reduced signaling via TLR4. In eosinophils, activation by ligand binding leads to the release of RNASE2, IL4 and leukotriene C4. Does not bind class I MHC antigens. This is Leukocyte immunoglobulin-like receptor subfamily A member 2 (LILRA2) from Homo sapiens (Human).